Here is a 1399-residue protein sequence, read N- to C-terminus: DNA-directed RNA polymerase subunit beta' (1399 aa).

Zn(2+)-binding residues include C70, C72, C85, and C88. Mg(2+) is bound by residues D460, D462, and D464. Residues C814, C888, C895, and C898 each contribute to the Zn(2+) site.

This sequence belongs to the RNA polymerase beta' chain family. The RNAP catalytic core consists of 2 alpha, 1 beta, 1 beta' and 1 omega subunit. When a sigma factor is associated with the core the holoenzyme is formed, which can initiate transcription. Requires Mg(2+) as cofactor. It depends on Zn(2+) as a cofactor.

It catalyses the reaction RNA(n) + a ribonucleoside 5'-triphosphate = RNA(n+1) + diphosphate. Functionally, DNA-dependent RNA polymerase catalyzes the transcription of DNA into RNA using the four ribonucleoside triphosphates as substrates. In Pseudomonas putida (strain GB-1), this protein is DNA-directed RNA polymerase subunit beta'.